Reading from the N-terminus, the 290-residue chain is Syntaxin (290 aa).

The tract at residues 1–22 is disordered; the sequence is MTKDRLAALKAAQSDDDDNDDV. Residues 1–267 are Cytoplasmic-facing; the sequence is MTKDRLAALK…KYQSKARRKK (267 aa). Residues 32–114 are a coiled coil; sequence MEEFFEQVDE…EEHTNKSSAD (83 aa). The 63-residue stretch at 194 to 256 folds into the t-SNARE coiled-coil homology domain; the sequence is LADIEARHND…ETAKMDTKKA (63 aa). Residues 268-288 traverse the membrane as a helical; Anchor for type IV membrane protein segment; that stretch reads IMILVCLAILIIILVGVIGGT. At 289–290 the chain is on the extracellular side; it reads LG.

Belongs to the syntaxin family.

It is found in the membrane. Its function is as follows. Potentially involved in docking of synaptic vesicles at presynaptic active zones. This is Syntaxin from Aplysia californica (California sea hare).